A 204-amino-acid polypeptide reads, in one-letter code: Large ribosomal subunit protein uL4 (204 aa).

A disordered region spans residues 44 to 76 (KRQGTQSAKTRSEVRGGGIKPWRQKGTGRARQG).

Belongs to the universal ribosomal protein uL4 family. In terms of assembly, part of the 50S ribosomal subunit.

One of the primary rRNA binding proteins, this protein initially binds near the 5'-end of the 23S rRNA. It is important during the early stages of 50S assembly. It makes multiple contacts with different domains of the 23S rRNA in the assembled 50S subunit and ribosome. Its function is as follows. Forms part of the polypeptide exit tunnel. This Clostridium perfringens (strain ATCC 13124 / DSM 756 / JCM 1290 / NCIMB 6125 / NCTC 8237 / Type A) protein is Large ribosomal subunit protein uL4.